The sequence spans 486 residues: Monocarboxylate transporter 12 (486 aa).

Topologically, residues 1–9 (MTKITRVGS) are cytoplasmic. The next 6 membrane-spanning stretches (helical) occupy residues 10 to 30 (ASPP…LVTI), 58 to 78 (AWIH…GSVV), 86 to 106 (AGIM…SFAT), 115 to 135 (LGVL…AMVG), 148 to 168 (IAMS…QLLI), and 177 to 197 (LLIL…MRPI). A compositionally biased stretch (basic and acidic residues) spans 201–220 (EDPSGPEKSHDRDAQREDCK). Residues 201–221 (EDPSGPEKSHDRDAQREDCKQ) form a disordered region. Transmembrane regions (helical) follow at residues 253-273 (FVVL…LFVY), 289-309 (AFLM…FGWL), 320-340 (YVCY…LPML), 353-373 (FGYF…EIVG), 383-403 (VVYF…GWLV), and 410-430 (TAAF…LGFA). The Cytoplasmic portion of the chain corresponds to 431-486 (KIAKRMKRTQVPFLVKDSDPKLHLWTNGSVAYSIAKELDQKDEESLAKARTGCNLT).

Belongs to the major facilitator superfamily. Monocarboxylate porter (TC 2.A.1.13) family. In terms of assembly, interacts with isoform 2 of BSG; this interaction is required for its localization to the plasma membrane. Detected in kidney, choroid plexus, testis, lung, stomach, large and small intestine, spleen, fat and parotid gland. In eye, expressed in cornea, ciliary epithelium, lens epithelium and lens fiber.

The protein localises to the cell membrane. The protein resides in the basolateral cell membrane. It catalyses the reaction creatine(in) = creatine(out). The enzyme catalyses guanidinoacetate(in) = guanidinoacetate(out). Its activity is regulated as follows. Creatine uptake is inhibited by carbonyl cyanide 3-chlorophenylhydrazone (CCCP) and by valinomycin. Functions as a transporter for creatine and as well for its precursor guanidinoacetate. Transport of creatine and GAA is independent of resting membrane potential and extracellular Na(+), Cl(-), or pH. Contributes to the process of creatine biosynthesis and distribution. This is Monocarboxylate transporter 12 from Rattus norvegicus (Rat).